The sequence spans 100 residues: MMREERLLKVILAPHVSEKSTNTAENNNTVVFKVAVDATKTEIKAAVEKLFEVEVKNVRTVNVKGKTKRTGSRFGKRSDWKKAYVALNEGADIDFSGGAE.

It belongs to the universal ribosomal protein uL23 family. In terms of assembly, part of the 50S ribosomal subunit. Contacts protein L29, and trigger factor when it is bound to the ribosome.

Functionally, one of the early assembly proteins it binds 23S rRNA. One of the proteins that surrounds the polypeptide exit tunnel on the outside of the ribosome. Forms the main docking site for trigger factor binding to the ribosome. This Idiomarina loihiensis (strain ATCC BAA-735 / DSM 15497 / L2-TR) protein is Large ribosomal subunit protein uL23.